Here is a 441-residue protein sequence, read N- to C-terminus: UDP-N-acetylmuramoylalanine--D-glutamate ligase (441 aa).

Residue 112–118 coordinates ATP; that stretch reads GTNGKTT.

It belongs to the MurCDEF family.

The protein resides in the cytoplasm. The enzyme catalyses UDP-N-acetyl-alpha-D-muramoyl-L-alanine + D-glutamate + ATP = UDP-N-acetyl-alpha-D-muramoyl-L-alanyl-D-glutamate + ADP + phosphate + H(+). Its pathway is cell wall biogenesis; peptidoglycan biosynthesis. Functionally, cell wall formation. Catalyzes the addition of glutamate to the nucleotide precursor UDP-N-acetylmuramoyl-L-alanine (UMA). This is UDP-N-acetylmuramoylalanine--D-glutamate ligase from Gloeobacter violaceus (strain ATCC 29082 / PCC 7421).